A 184-amino-acid polypeptide reads, in one-letter code: Acetyl-CoA decarbonylase/synthase complex subunit epsilon 1 (184 aa).

Belongs to the CdhB family. In terms of assembly, heterotetramer of two alpha and two epsilon subunits. The ACDS complex is made up of alpha, epsilon, beta, gamma and delta subunits with a probable stoichiometry of (alpha(2)epsilon(2))(4)-beta(8)-(gamma(1)delta(1))(8).

Part of a complex that catalyzes the reversible cleavage of acetyl-CoA, allowing autotrophic growth from CO(2). The alpha-epsilon subcomponent functions as a carbon monoxide dehydrogenase. The precise role of the epsilon subunit is unclear; it may have a stabilizing role within the alpha(2)epsilon(2) component and/or be involved in electron transfer to FAD during a potential FAD-mediated CO oxidation. This Archaeoglobus fulgidus (strain ATCC 49558 / DSM 4304 / JCM 9628 / NBRC 100126 / VC-16) protein is Acetyl-CoA decarbonylase/synthase complex subunit epsilon 1 (cdhB1).